Here is a 90-residue protein sequence, read N- to C-terminus: U7-theraphotoxin-Hhn1l (90 aa).

Residues 1 to 19 form the signal peptide; the sequence is MKTAIFTVVLALAVFAVLS. Residues 20-50 constitute a propeptide that is removed on maturation; sequence FGWEANEKALSEEFTELIHEKEAASETEARE. Intrachain disulfides connect Cys-51-Cys-65, Cys-58-Cys-70, and Cys-64-Cys-81.

The protein belongs to the neurotoxin 10 (Hwtx-1) family. 13 (Hntx-13) subfamily. Expressed by the venom gland.

The protein resides in the secreted. Its function is as follows. Ion channel inhibitor. The protein is U7-theraphotoxin-Hhn1l of Cyriopagopus hainanus (Chinese bird spider).